Reading from the N-terminus, the 499-residue chain is Glycerol kinase (499 aa).

Residue Thr13 participates in ADP binding. ATP-binding residues include Thr13, Thr14, and Ser15. Thr13 contacts sn-glycerol 3-phosphate. Residue Arg17 coordinates ADP. Sn-glycerol 3-phosphate-binding residues include Arg83, Glu84, Tyr135, and Asp245. Glycerol contacts are provided by Arg83, Glu84, Tyr135, Asp245, and Gln246. The ADP site is built by Thr267 and Gly310. ATP is bound by residues Thr267, Gly310, Gln314, and Gly411. Positions 411 and 415 each coordinate ADP.

This sequence belongs to the FGGY kinase family.

The enzyme catalyses glycerol + ATP = sn-glycerol 3-phosphate + ADP + H(+). It participates in polyol metabolism; glycerol degradation via glycerol kinase pathway; sn-glycerol 3-phosphate from glycerol: step 1/1. Inhibited by fructose 1,6-bisphosphate (FBP). Key enzyme in the regulation of glycerol uptake and metabolism. Catalyzes the phosphorylation of glycerol to yield sn-glycerol 3-phosphate. The chain is Glycerol kinase from Xanthomonas axonopodis pv. citri (strain 306).